A 544-amino-acid polypeptide reads, in one-letter code: GMP synthase [glutamine-hydrolyzing] (544 aa).

The Glutamine amidotransferase type-1 domain occupies 12–210 (TILILDFGSQ…VKNVCSVRDG (199 aa)). The Nucleophile role is filled by cysteine 88. Active-site residues include histidine 184 and glutamate 186. Residues 211–419 (WSMESFIPKE…LNIPEHLVGR (209 aa)) form the GMPS ATP-PPase domain. An ATP-binding site is contributed by 239-245 (SGGVDST). Residues arginine 312, aspartate 481, lysine 536, and glutamate 542 each coordinate XMP.

In terms of assembly, homodimer. Also forms a small population of homotetramers. Mg(2+) is required as a cofactor.

The protein resides in the cytoplasm. It is found in the cytosol. It catalyses the reaction XMP + L-glutamine + ATP + H2O = GMP + L-glutamate + AMP + diphosphate + 2 H(+). It functions in the pathway purine metabolism; GMP biosynthesis; GMP from XMP (L-Gln route): step 1/1. In terms of biological role, catalyzes the conversion of xanthine monophosphate (XMP) to GMP in the presence of glutamine and ATP through an adenyl-XMP intermediate. This is GMP synthase [glutamine-hydrolyzing] from Cryptococcus neoformans var. neoformans serotype D (strain JEC21 / ATCC MYA-565) (Filobasidiella neoformans).